The chain runs to 394 residues: Elongation factor Tu 2 (394 aa).

The 195-residue stretch at 10 to 204 (KPHVNVGTIG…HLDTYIPEPE (195 aa)) folds into the tr-type G domain. Positions 19–26 (GHVDHGKT) are G1. 19–26 (GHVDHGKT) is a binding site for GTP. Mg(2+) is bound at residue Thr-26. The segment at 60–64 (GITIN) is G2. Residues 81–84 (DCPG) form a G3 region. GTP is bound by residues 81–85 (DCPGH) and 136–139 (NKCD). Residues 136–139 (NKCD) are G4. The G5 stretch occupies residues 174–176 (SAL).

The protein belongs to the TRAFAC class translation factor GTPase superfamily. Classic translation factor GTPase family. EF-Tu/EF-1A subfamily. In terms of assembly, monomer.

The protein resides in the cytoplasm. It catalyses the reaction GTP + H2O = GDP + phosphate + H(+). In terms of biological role, GTP hydrolase that promotes the GTP-dependent binding of aminoacyl-tRNA to the A-site of ribosomes during protein biosynthesis. The protein is Elongation factor Tu 2 of Haemophilus influenzae (strain 86-028NP).